The sequence spans 101 residues: Small ribosomal subunit protein bS18c (101 aa).

Residues 1–19 (MDKSKRLFRKSKRSFRRRL) show a composition bias toward basic residues. Residues 1–23 (MDKSKRLFRKSKRSFRRRLPPIG) are disordered.

Belongs to the bacterial ribosomal protein bS18 family. Part of the 30S ribosomal subunit.

It localises to the plastid. The protein resides in the chloroplast. The polypeptide is Small ribosomal subunit protein bS18c (Liriodendron tulipifera (Tuliptree)).